The following is a 144-amino-acid chain: Putative golgin subfamily A member 2B (144 aa).

Disordered regions lie at residues 1–20 (MDSE…PEDL) and 95–132 (SCGR…EAAG). Residues 110–131 (AEGGGVHQQAGPGQGRGEGEAA) show a composition bias toward gly residues.

This sequence belongs to the GOLGA2 family.

The chain is Putative golgin subfamily A member 2B (GOLGA2P5) from Homo sapiens (Human).